We begin with the raw amino-acid sequence, 182 residues long: MKVSADTPGHDDPGPGRRLGLDVGTVRIGVAASDRDAKLAMPVETVPRETGFKGPDLADIDRLVAIVEEYNAVEVIVGLPTDLQGNGSASVKHAKEIAFRVRRRLTNAGKNIPVRLGDERLTTVVATQALRASGVSEKAGRKVIDQAAAVEILQTWLDARTRALEPQSTDTQDFDEKGNFPG.

Belongs to the YqgF nuclease family.

Its subcellular location is the cytoplasm. In terms of biological role, could be a nuclease involved in processing of the 5'-end of pre-16S rRNA. This Corynebacterium glutamicum (strain ATCC 13032 / DSM 20300 / JCM 1318 / BCRC 11384 / CCUG 27702 / LMG 3730 / NBRC 12168 / NCIMB 10025 / NRRL B-2784 / 534) protein is Putative pre-16S rRNA nuclease.